We begin with the raw amino-acid sequence, 169 residues long: Translationally-controlled tumor protein homolog (169 aa).

The TCTP domain maps to Met1 to Tyr169.

Belongs to the TCTP family.

It is found in the cytoplasm. In terms of biological role, involved in calcium binding and microtubule stabilization. The sequence is that of Translationally-controlled tumor protein homolog (TCTP) from Schistosoma japonicum (Blood fluke).